The chain runs to 345 residues: Probable 1-aminocyclopropane-1-carboxylate deaminase (345 aa).

The residue at position 58 (Lys-58) is an N6-(pyridoxal phosphate)lysine. Ser-85 acts as the Nucleophile in catalysis.

This sequence belongs to the ACC deaminase/D-cysteine desulfhydrase family. Pyridoxal 5'-phosphate serves as cofactor.

It catalyses the reaction 1-aminocyclopropane-1-carboxylate + H2O = 2-oxobutanoate + NH4(+). Functionally, catalyzes a cyclopropane ring-opening reaction, the irreversible conversion of 1-aminocyclopropane-1-carboxylate (ACC) to ammonia and alpha-ketobutyrate. This is Probable 1-aminocyclopropane-1-carboxylate deaminase from Cryptococcus neoformans var. neoformans serotype D (strain JEC21 / ATCC MYA-565) (Filobasidiella neoformans).